The primary structure comprises 208 residues: MTNKDESVEKNTESTVEVTNVKQNIDDSVEQTEESKGHLQDEAIEETSDENVIEEIDPKDQKINELQQLADENEEKYLRLYAEFENYKRRIQKENEINKTYQAQRVLTDILPAIDNIERALQIEGDDETFKSLQKGVQMVHESLINALKDNGLEVIKTEGEAFDPNIHQAVVQDDNPDFESGEITQELQKGYKLKDRVLRPSMVKVNQ.

A compositionally biased stretch (basic and acidic residues) spans 1-12 (MTNKDESVEKNT). Residues 1 to 49 (MTNKDESVEKNTESTVEVTNVKQNIDDSVEQTEESKGHLQDEAIEETSD) form a disordered region. Polar residues predominate over residues 13-23 (ESTVEVTNVKQ).

The protein belongs to the GrpE family. In terms of assembly, homodimer.

The protein localises to the cytoplasm. Participates actively in the response to hyperosmotic and heat shock by preventing the aggregation of stress-denatured proteins, in association with DnaK and GrpE. It is the nucleotide exchange factor for DnaK and may function as a thermosensor. Unfolded proteins bind initially to DnaJ; upon interaction with the DnaJ-bound protein, DnaK hydrolyzes its bound ATP, resulting in the formation of a stable complex. GrpE releases ADP from DnaK; ATP binding to DnaK triggers the release of the substrate protein, thus completing the reaction cycle. Several rounds of ATP-dependent interactions between DnaJ, DnaK and GrpE are required for fully efficient folding. This is Protein GrpE from Staphylococcus aureus (strain bovine RF122 / ET3-1).